A 252-amino-acid polypeptide reads, in one-letter code: Small ribosomal subunit protein uS3 (252 aa).

One can recognise a KH type-2 domain in the interval 39 to 110 (IRKALMKELK…EVKINVVEIK (72 aa)). The tract at residues 218-252 (TSDEKPKFEKRDFNRSNNNRRDQAPKSHPVAKEAK) is disordered. Residues 219–252 (SDEKPKFEKRDFNRSNNNRRDQAPKSHPVAKEAK) are compositionally biased toward basic and acidic residues.

It belongs to the universal ribosomal protein uS3 family. In terms of assembly, part of the 30S ribosomal subunit. Forms a tight complex with proteins S10 and S14.

Its function is as follows. Binds the lower part of the 30S subunit head. Binds mRNA in the 70S ribosome, positioning it for translation. The polypeptide is Small ribosomal subunit protein uS3 (Spiroplasma citri).